Consider the following 189-residue polypeptide: Auxin-responsive protein IAA6 (189 aa).

The short motif at 13–17 (LRLGL) is the EAR-like (transcriptional repression) element. Residues 93–178 (IGYVKVSMDG…SCKRLRIVKR (86 aa)) form the PB1 domain.

It belongs to the Aux/IAA family. As to quaternary structure, homodimers and heterodimers. Interacts with TPL. In terms of tissue distribution, highly expressed in stems and flowers.

The protein localises to the nucleus. Functionally, aux/IAA proteins are short-lived transcriptional factors that function as repressors of early auxin response genes at low auxin concentrations. Repression is thought to result from the interaction with auxin response factors (ARFs), proteins that bind to the auxin-responsive promoter element (AuxRE). Formation of heterodimers with ARF proteins may alter their ability to modulate early auxin response genes expression. This Arabidopsis thaliana (Mouse-ear cress) protein is Auxin-responsive protein IAA6 (IAA6).